A 460-amino-acid chain; its full sequence is Kynureninase (460 aa).

Residues Leu-116, Thr-117, 144–147, Ser-199, Asp-228, His-231, and Tyr-253 each bind pyridoxal 5'-phosphate; that span reads FPSD. Lys-254 carries the post-translational modification N6-(pyridoxal phosphate)lysine. The pyridoxal 5'-phosphate site is built by Trp-288 and Asn-316.

This sequence belongs to the kynureninase family. As to quaternary structure, homodimer. Requires pyridoxal 5'-phosphate as cofactor.

Its subcellular location is the cytoplasm. It carries out the reaction L-kynurenine + H2O = anthranilate + L-alanine + H(+). The catalysed reaction is 3-hydroxy-L-kynurenine + H2O = 3-hydroxyanthranilate + L-alanine + H(+). Its pathway is amino-acid degradation; L-kynurenine degradation; L-alanine and anthranilate from L-kynurenine: step 1/1. The protein operates within cofactor biosynthesis; NAD(+) biosynthesis; quinolinate from L-kynurenine: step 2/3. Catalyzes the cleavage of L-kynurenine (L-Kyn) and L-3-hydroxykynurenine (L-3OHKyn) into anthranilic acid (AA) and 3-hydroxyanthranilic acid (3-OHAA), respectively. In Debaryomyces hansenii (strain ATCC 36239 / CBS 767 / BCRC 21394 / JCM 1990 / NBRC 0083 / IGC 2968) (Yeast), this protein is Kynureninase.